The chain runs to 162 residues: Beta-lactoglobulin-3 (162 aa).

2 disulfide bridges follow: Cys-66/Cys-160 and Cys-106/Cys-119.

It belongs to the calycin superfamily. Lipocalin family. In terms of assembly, monomer.

Its subcellular location is the secreted. In terms of biological role, lactoglobulin is the primary component of whey, it binds retinol and is probably involved in the transport of that molecule. The polypeptide is Beta-lactoglobulin-3 (LGB3) (Felis catus (Cat)).